A 74-amino-acid chain; its full sequence is uncharacterized protein (74 aa).

The signal sequence occupies residues 1 to 25; it reads MMMTDLPENIRKTAVALLRLGEATA.

This is an uncharacterized protein from Archaeoglobus fulgidus (strain ATCC 49558 / DSM 4304 / JCM 9628 / NBRC 100126 / VC-16).